We begin with the raw amino-acid sequence, 1000 residues long: C2 domain-containing protein 5 (1000 aa).

A C2 domain is found at 1–109 (MPGKLKVKIV…EAATVISGWF (109 aa)). 6 residues coordinate Ca(2+): Asp19, Asp26, Asp76, Asp78, Ser81, and Asp84. At Ser197 the chain carries Phosphoserine; by PKB/AKT2. Phosphoserine occurs at positions 200 and 260. Residues 265 to 330 (MKEIPFNEDP…SGSAGKEGGP (66 aa)) form a disordered region. Positions 274–289 (PNPNTHSSGPSTPLKN) are enriched in polar residues. Over residues 290-318 (QTYSFSPSKSYSRQSSSSDTDLSLTPKTG) the composition is skewed to low complexity. Phosphoserine occurs at positions 293, 295, 304, 305, and 306. Residue Thr317 is modified to Phosphothreonine. A compositionally biased stretch (gly residues) spans 319-328 (MGSGSAGKEG). Ser323 is subject to Phosphoserine. A Phosphothreonine modification is found at Thr601. The tract at residues 639 to 669 (EIIGSPIPEPRQRSRLLRSQSESSDEVTELD) is disordered. Phosphoserine occurs at positions 643, 657, 659, 661, and 662. Thr666 is subject to Phosphothreonine. At Ser671 the chain carries Phosphoserine. Thr807 carries the post-translational modification Phosphothreonine. Ser817 and Ser852 each carry phosphoserine.

It depends on Ca(2+) as a cofactor. Post-translationally, phosphorylated on Ser-197 by active myristoylated kinase AKT2; insulin-stimulated phosphorylation by AKT2 regulates SLC2A4/GLUT4 translocation into the plasma membrane.

Its subcellular location is the cytoplasmic vesicle membrane. The protein resides in the cytoplasm. It localises to the cell cortex. The protein localises to the cell membrane. It is found in the cell projection. Its subcellular location is the ruffle. Functionally, required for insulin-stimulated glucose transport and glucose transporter SLC2A4/GLUT4 translocation from intracellular glucose storage vesicle (GSV) to the plasma membrane (PM) in adipocytes. Binds phospholipid membranes in a calcium-dependent manner and is necessary for the optimal membrane fusion between SLC2A4/GLUT4 GSV and the PM. The polypeptide is C2 domain-containing protein 5 (C2CD5) (Homo sapiens (Human)).